A 638-amino-acid chain; its full sequence is Guanylate-binding protein 7 (638 aa).

Positions 1–310 are GTPase domain (Globular); that stretch reads MASEIHMPGP…DAINSGATPC (310 aa). Positions 35–277 constitute a GB1/RHD3-type G domain; it reads TQPVVVVAIV…FCSYIFTHAK (243 aa). Residues 45-52, 67-69, and 97-101 each bind GTP; these read GLYRTGKS, LGC, and DTEGL. The tract at residues 311-638 is interaction with the CYBA-CYBB complex; sequence LENAMAVLAQ…LRNPGKKIIS (328 aa). The tract at residues 590–638 is C-terminal tail; required for its localization to cytoplasmic vesicle; that stretch reads PSVFSQILDVAGSIFIAALPGAAKLVDLGMKILSSLCNRLRNPGKKIIS.

It belongs to the TRAFAC class dynamin-like GTPase superfamily. GB1/RHD3 GTPase family. GB1 subfamily. In terms of assembly, monomer and dimer. Interacts with CYBA, CYBA-CYBB complex and ATG4B. Interacts (via GB1/RHD3-type G domain) with NCF2 and NCF2-NCF4 complex.

The protein localises to the cytoplasmic vesicle membrane. The enzyme catalyses GTP + H2O = GDP + phosphate + H(+). It carries out the reaction GDP + H2O = GMP + phosphate + H(+). In terms of biological role, interferon (IFN)-inducible GTPase that plays important roles in innate immunity against a diverse range of bacterial, viral and protozoan pathogens. Hydrolyzes GTP to GMP in two consecutive cleavage reactions and predominantly uses GTP and not GDP or GMP as the substrate. Following infection, recruited to the pathogen-containing vacuoles or vacuole-escaped bacteria and acts as a positive regulator of inflammasome assembly by promoting the release of inflammasome ligands from bacteria. Acts by promoting lysis of pathogen-containing vacuoles, releasing pathogens into the cytosol. Following pathogen release in the cytosol, promotes recruitment of proteins that mediate bacterial cytolysis: this liberates ligands that are detected by inflammasomes, such as lipopolysaccharide (LPS) that activates the non-canonical CASP4/CASP11 inflammasome or double-stranded DNA (dsDNA) that activates the AIM2 inflammasome. Also promotes IFN-gamma-mediated host defense against bacterial infections by regulating oxidative responses and bacteriolytic peptide generation. May help to assemble NADPH oxidase on phagosomal membranes by acting as a bridging protein between NADPH oxidase cytosolic subunits NCF2-NCF4 and the membrane subunits CYBA-CYBB. Participates along with GBP1 in trafficking monoubiquinated protein cargo to autolysosomes for generating ubiquitin-derived antimicrobial peptides. Facilitates influenza A virus replication by inhibiting the activation of NF-kappaB and JAK-STAT signaling pathways and the expression of type I, type III interferons and pro-inflammatory cytokines. Confers protection to several pathogens, including the bacterial pathogens Listeria monocytogenes and Mycobacterium bovis BCG as well as the protozoan pathogen Toxoplasma gondii. Required for disruption of the parasitophorous vacuole formed following T.gondii infection and subsequent killing of the parasite. The sequence is that of Guanylate-binding protein 7 (GBP7) from Homo sapiens (Human).